Here is a 263-residue protein sequence, read N- to C-terminus: 4'-phosphopantetheinyl transferase pptA (263 aa).

Belongs to the P-Pant transferase superfamily.

The enzyme catalyses apo-[ACP] + CoA = holo-[ACP] + adenosine 3',5'-bisphosphate + H(+). In terms of biological role, transfers the 4'-phosphopantetheine moiety from coenzyme A to a Ser of an acyl-carrier-protein. Activates the peptidyl carrier protein (PCP) domains of surfactin synthas. The polypeptide is 4'-phosphopantetheinyl transferase pptA (pptA) (Paxillus involutus (Naked brimcap)).